Reading from the N-terminus, the 179-residue chain is Large ribosomal subunit protein uL5 (179 aa).

Belongs to the universal ribosomal protein uL5 family. Part of the 50S ribosomal subunit; part of the 5S rRNA/L5/L18/L25 subcomplex. Contacts the 5S rRNA and the P site tRNA. Forms a bridge to the 30S subunit in the 70S ribosome.

Its function is as follows. This is one of the proteins that bind and probably mediate the attachment of the 5S RNA into the large ribosomal subunit, where it forms part of the central protuberance. In the 70S ribosome it contacts protein S13 of the 30S subunit (bridge B1b), connecting the 2 subunits; this bridge is implicated in subunit movement. Contacts the P site tRNA; the 5S rRNA and some of its associated proteins might help stabilize positioning of ribosome-bound tRNAs. The sequence is that of Large ribosomal subunit protein uL5 from Geobacillus thermodenitrificans (strain NG80-2).